Consider the following 853-residue polypeptide: Replication protein A 70 kDa DNA-binding subunit C (853 aa).

The tract at residues 118-282 is disordered; it reads PKEPGHSSIN…QSAYQPQQPP (165 aa). 6 stretches are compositionally biased toward polar residues: residues 124–144, 159–173, 180–194, 201–211, 222–249, and 263–278; these read SSIN…SEQQ, SANS…NSSD, SANS…SSSD, SANSPQRQVVH, PQVS…SSNA, and TATT…AYQP. A DNA-binding region (OB) is located at residues 312–399; sequence WTIKVRVTSK…NDYEIHLDSA (88 aa). Residues 602 to 628 form a C4-type zinc finger; that stretch reads CPIMNGDRPCSKKVTNNGDGTWRCEKC.

It belongs to the replication factor A protein 1 family. In terms of assembly, heterotrimer of RPA1, RPA2 and RPA3 (canonical replication protein A complex).

The protein resides in the nucleus. Component of the replication protein A complex (RPA) required for DNA recombination, repair and replication. The activity of RPA is mediated by single-stranded DNA binding and protein interactions. Probably involved in repair of double-strand DNA breaks (DSBs) induced by genotoxic stresses. The sequence is that of Replication protein A 70 kDa DNA-binding subunit C (RPA1C) from Arabidopsis thaliana (Mouse-ear cress).